The following is a 450-amino-acid chain: Probable glycine dehydrogenase (decarboxylating) subunit 1 (450 aa).

This sequence belongs to the GcvP family. N-terminal subunit subfamily. In terms of assembly, the glycine cleavage system is composed of four proteins: P, T, L and H. In this organism, the P 'protein' is a heterodimer of two subunits.

It catalyses the reaction N(6)-[(R)-lipoyl]-L-lysyl-[glycine-cleavage complex H protein] + glycine + H(+) = N(6)-[(R)-S(8)-aminomethyldihydrolipoyl]-L-lysyl-[glycine-cleavage complex H protein] + CO2. The glycine cleavage system catalyzes the degradation of glycine. The P protein binds the alpha-amino group of glycine through its pyridoxal phosphate cofactor; CO(2) is released and the remaining methylamine moiety is then transferred to the lipoamide cofactor of the H protein. In Brevibacillus brevis (strain 47 / JCM 6285 / NBRC 100599), this protein is Probable glycine dehydrogenase (decarboxylating) subunit 1.